The following is a 552-amino-acid chain: Undecaprenyl phosphate-alpha-4-amino-4-deoxy-L-arabinose arabinosyl transferase (552 aa).

Transmembrane regions (helical) follow at residues 4–24 (IAGWFTLAVLFVLYYIVPLPG), 81–101 (FAVRFGAVLATVLSALLVFWL), 113–133 (VVAVLIYLTSFLVYGVGSYAV), 176–196 (FMTKGFLALAIPVIAVLPWVI), 207–227 (FGPLAVLSAILISLPWVLAIA), 255–275 (APFWYYLPILLIGLLPWLGLL), 289–309 (QGGDFYLLGWAVMPFLLFSIA), 313–333 (LPTYILPCFAPLAILMAGYVQ), 351–371 (LLVGLGGMAAILLVLAPWGIT), 384–404 (VILGTIAFGVWALFGALSLYH), and 411–431 (WSAACLLGVALLIGTALPQQV).

Belongs to the glycosyltransferase 83 family.

The protein localises to the cell inner membrane. The catalysed reaction is 4-amino-4-deoxy-alpha-L-arabinopyranosyl di-trans,octa-cis-undecaprenyl phosphate + lipid IVA = lipid IIA + di-trans,octa-cis-undecaprenyl phosphate.. It participates in lipopolysaccharide metabolism; 4-amino-4-deoxy-beta-L-arabinose-lipid A biosynthesis. Functionally, catalyzes the transfer of the L-Ara4N moiety of the glycolipid undecaprenyl phosphate-alpha-L-Ara4N to lipid A. The modified arabinose is attached to lipid A and is required for resistance to polymyxin and cationic antimicrobial peptides. The protein is Undecaprenyl phosphate-alpha-4-amino-4-deoxy-L-arabinose arabinosyl transferase of Edwardsiella ictaluri (strain 93-146).